We begin with the raw amino-acid sequence, 823 residues long: Endoplasmin homolog (823 aa).

The first 23 residues, Met-1–Gly-23, serve as a signal peptide directing secretion. The disordered stretch occupies residues Asn-29–Val-60. Over residues Asp-39–Gly-48 the composition is skewed to basic and acidic residues. ATP-binding positions include Glu-106, Asn-110, Asp-154, Met-159, Asn-167, Lys-173, Ser-174 to Gly-175, Gln-194 to Phe-199, Phe-199, and Thr-246. Asn-110 carries N-linked (GlcNAc...) asparagine glycosylation. Residues Glu-289 to Thr-328 form a disordered region. A compositionally biased stretch (acidic residues) spans Thr-290–Asp-321. Residues Asn-452 and Asn-620 are each glycosylated (N-linked (GlcNAc...) asparagine). Acidic residues predominate over residues Val-777–Glu-792. Residues Val-777–Leu-823 form a disordered region. Positions Lys-820–Leu-823 match the Prevents secretion from ER motif.

This sequence belongs to the heat shock protein 90 family. As to quaternary structure, interacts with FKBP42. Interacts with P23-1. In terms of tissue distribution, ubiquitous.

The protein resides in the endoplasmic reticulum lumen. In terms of biological role, may have a molecular chaperone role in the processing of secreted materials. Required for shoot apical meristem (SAM), root apical meristem (RAM) and floral meristem (FM) formation, probably by regulating the folding of CLAVATA proteins (CLVs). Also involved in pollen tube elongation. Involved in resistance to tunicamycin- or high calcium-induced ER stresses. Possesses ATPase activity. This is Endoplasmin homolog from Arabidopsis thaliana (Mouse-ear cress).